The following is a 322-amino-acid chain: tRNA U34 carboxymethyltransferase (322 aa).

Residues lysine 92, tryptophan 106, lysine 111, glycine 131, 153–155, 181–182, methionine 196, tyrosine 200, and arginine 315 each bind carboxy-S-adenosyl-L-methionine; these read DPT and VE.

It belongs to the class I-like SAM-binding methyltransferase superfamily. CmoB family. Homotetramer.

The enzyme catalyses carboxy-S-adenosyl-L-methionine + 5-hydroxyuridine(34) in tRNA = 5-carboxymethoxyuridine(34) in tRNA + S-adenosyl-L-homocysteine + H(+). Its function is as follows. Catalyzes carboxymethyl transfer from carboxy-S-adenosyl-L-methionine (Cx-SAM) to 5-hydroxyuridine (ho5U) to form 5-carboxymethoxyuridine (cmo5U) at position 34 in tRNAs. This Colwellia psychrerythraea (strain 34H / ATCC BAA-681) (Vibrio psychroerythus) protein is tRNA U34 carboxymethyltransferase.